A 694-amino-acid polypeptide reads, in one-letter code: Proprotein convertase subtilisin/kexin type 9 (694 aa).

An N-terminal signal peptide occupies residues 1–34; that stretch reads MGTHCSAWLRWPLLPLLPPLLLLLLLLCPTGAGA. A propeptide spanning residues 35-155 is cleaved from the precursor; it reads QDEDGDYEEL…IEEDSFVFAQ (121 aa). Tyrosine 41 carries the post-translational modification Sulfotyrosine. Phosphoserine is present on serine 50. The Peptidase S8 domain maps to 158–470; that stretch reads PWNLERIIPA…RTVWSAHSGP (313 aa). Residues aspartate 189 and histidine 229 each act as charge relay system in the active site. 2 cysteine pairs are disulfide-bonded: cysteine 226-cysteine 258 and cysteine 326-cysteine 361. Residue serine 389 is the Charge relay system of the active site. A C-terminal domain region spans residues 453–694; it reads ETGGQLLCRT…RPSAKASWVQ (242 aa). 3 disulfide bridges follow: cysteine 460/cysteine 530, cysteine 480/cysteine 529, and cysteine 489/cysteine 512. Residues 499 to 501 carry the Cell attachment site motif; the sequence is RGD. Asparagine 536 carries N-linked (GlcNAc...) asparagine glycosylation. Disulfide bonds link cysteine 537/cysteine 604, cysteine 555/cysteine 603, cysteine 565/cysteine 591, cysteine 611/cysteine 682, cysteine 629/cysteine 681, and cysteine 638/cysteine 657. Serine 691 carries the phosphoserine modification.

It belongs to the peptidase S8 family. In terms of assembly, monomer. Can self-associate to form dimers and higher multimers which may have increased LDLR degrading activity. The precursor protein but not the mature protein may form multimers. Interacts with APOB, VLDLR, LRP8/APOER2 and BACE1. The full-length immature form (pro-PCSK9) interacts with SCNN1A, SCNN1B and SCNN1G. The pro-PCSK9 form (via C-terminal domain) interacts with LDLR. Interacts (via the C-terminal domain) with ANXA2 (via repeat Annexin 1); the interaction inhibits the degradation of LDLR. Ca(2+) is required as a cofactor. In terms of processing, cleavage by furin and PCSK5 generates a truncated inactive protein that is unable to induce LDLR degradation. Undergoes autocatalytic cleavage in the endoplasmic reticulum to release the propeptide from the N-terminus and the cleavage of the propeptide is strictly required for its maturation and activation. The cleaved propeptide however remains associated with the catalytic domain through non-covalent interactions, preventing potential substrates from accessing its active site. As a result, it is secreted from cells as a propeptide-containing, enzymatically inactive protein. Post-translationally, phosphorylation protects the propeptide against proteolysis. As to expression, hepatocytes, kidney mesenchymal cells, intestinal ileum, colon epithelia and embryonic brain telencephalon neurons.

The protein localises to the cytoplasm. Its subcellular location is the secreted. It localises to the endosome. The protein resides in the lysosome. It is found in the cell surface. The protein localises to the endoplasmic reticulum. Its subcellular location is the golgi apparatus. Its proteolytic activity is autoinhibited by the non-covalent binding of the propeptide to the catalytic domain. Inhibited by EGTA. In terms of biological role, crucial player in the regulation of plasma cholesterol homeostasis. Binds to low-density lipid receptor family members: low density lipoprotein receptor (LDLR), very low density lipoprotein receptor (VLDLR), apolipoprotein E receptor (LRP1/APOER) and apolipoprotein receptor 2 (LRP8/APOER2), and promotes their degradation in intracellular acidic compartments. Acts via a non-proteolytic mechanism to enhance the degradation of the hepatic LDLR through a clathrin LDLRAP1/ARH-mediated pathway. May prevent the recycling of LDLR from endosomes to the cell surface or direct it to lysosomes for degradation. Can induce ubiquitination of LDLR leading to its subsequent degradation. Inhibits intracellular degradation of APOB via the autophagosome/lysosome pathway in a LDLR-independent manner. Involved in the disposal of non-acetylated intermediates of BACE1 in the early secretory pathway. Inhibits epithelial Na(+) channel (ENaC)-mediated Na(+) absorption by reducing ENaC surface expression primarily by increasing its proteasomal degradation. Regulates neuronal apoptosis via modulation of LRP8/APOER2 levels and related anti-apoptotic signaling pathways. This chain is Proprotein convertase subtilisin/kexin type 9 (Pcsk9), found in Mus musculus (Mouse).